The primary structure comprises 139 residues: Large ribosomal subunit protein uL16 (139 aa).

It belongs to the universal ribosomal protein uL16 family. Part of the 50S ribosomal subunit.

Binds 23S rRNA and is also seen to make contacts with the A and possibly P site tRNAs. The chain is Large ribosomal subunit protein uL16 from Prosthecochloris aestuarii (strain DSM 271 / SK 413).